The chain runs to 207 residues: Large ribosomal subunit protein uL4 (207 aa).

Residues 49-78 (HAVKNRSAVSGGGRKPWRQKGTGRARQGSI) form a disordered region.

The protein belongs to the universal ribosomal protein uL4 family. In terms of assembly, part of the 50S ribosomal subunit.

Functionally, one of the primary rRNA binding proteins, this protein initially binds near the 5'-end of the 23S rRNA. It is important during the early stages of 50S assembly. It makes multiple contacts with different domains of the 23S rRNA in the assembled 50S subunit and ribosome. Forms part of the polypeptide exit tunnel. In Streptococcus pyogenes serotype M1, this protein is Large ribosomal subunit protein uL4 (rplD).